The sequence spans 265 residues: Chanoclavine-I dehydrogenase easD (265 aa).

Residues 1–20 form the signal peptide; that stretch reads MSFVSSKIFAITGGASGIGA. NADP(+) contacts are provided by Ile-18, Asp-66, Arg-132, Tyr-169, Lys-173, and Thr-205. Tyr-169 functions as the Proton donor in the catalytic mechanism. Lys-173 acts as the Lowers pKa of active site Tyr in catalysis.

This sequence belongs to the short-chain dehydrogenases/reductases (SDR) family. In terms of assembly, homotetramer.

The catalysed reaction is chanoclavine-I + NAD(+) = chanoclavine-I aldehyde + NADH + H(+). The protein operates within alkaloid biosynthesis; ergot alkaloid biosynthesis. In terms of biological role, chanoclavine-I dehydrogenase; part of the gene cluster that mediates the biosynthesis of fungal ergot alkaloid. DmaW catalyzes the first step of ergot alkaloid biosynthesis by condensing dimethylallyl diphosphate (DMAP) and tryptophan to form 4-dimethylallyl-L-tryptophan. The second step is catalyzed by the methyltransferase easF that methylates 4-dimethylallyl-L-tryptophan in the presence of S-adenosyl-L-methionine, resulting in the formation of 4-dimethylallyl-L-abrine. The catalase easC and the FAD-dependent oxidoreductase easE then transform 4-dimethylallyl-L-abrine to chanoclavine-I which is further oxidized by easD in the presence of NAD(+), resulting in the formation of chanoclavine-I aldehyde. Chanoclavine-I aldehyde is the precursor of ergoamides and ergopeptines in Clavicipitaceae, and clavine-type alcaloids such as fumiclavine in Trichocomaceae. However, the metabolites downstream of chanoclavine-I aldehyde in Arthrodermataceae have not been identified yet. The polypeptide is Chanoclavine-I dehydrogenase easD (Trichophyton verrucosum (strain HKI 0517)).